Here is a 1588-residue protein sequence, read N- to C-terminus: Paternally-expressed gene 3 protein (1588 aa).

The SCAN box domain occupies 46 to 128 (HQRFRNLIYV…TLLENYKEMY (83 aa)). 3 disordered regions span residues 128–231 (YQPE…YQNV), 265–304 (GHSHMTQGHSSRSKRSAYPSTSRGLKTMPEAKKSTHRRGI), and 317–347 (KFIKDVSRSSKSGRARESSDRSQRFPRMSDD). The segment covering 129–142 (QPEDDNNSDVTSDD) has biased composition (acidic residues). Composition is skewed to basic and acidic residues over residues 143–152 (DMTRNRRESS), 160–181 (FSDRDWDRRGRSRDMEPRDRWS), 205–224 (FEMDREDDRDSRAYESRSQD), and 293–304 (PEAKKSTHRRGI). 3 consecutive C2H2-type zinc fingers follow at residues 452–474 (YVCDECGRSFSVISEFVEHQIMH), 505–527 (FECKDCGETFNKSAALAEHRKIH), and 563–585 (YECRVCKETFLHSSALIEHQKIH). A compositionally biased stretch (basic and acidic residues) spans 588–607 (DDKDNEREHERERERERGET). A disordered region spans residues 588 to 608 (DDKDNEREHERERERERGETF). A C2H2-type 4 zinc finger spans residues 627 to 649 (YECKVCGETFLHSSSLKEHQKIH). Disordered regions lie at residues 839–889 (VASK…SKNR) and 905–929 (QKSVPGEGSGEFKKDGEFSVPSSNV). Residues 868–881 (LNDKRQKIPARENP) are compositionally biased toward basic and acidic residues. The C2H2-type 5 zinc finger occupies 969 to 991 (YECQECGECFAHSSDLTEHQKIH). Positions 1056–1104 (EKSHGEESQGENTDGEETHSEETHGQETIEDPVIQGSDMEDPQKDDPDD) are disordered. Over residues 1071–1082 (EETHSEETHGQE) the composition is skewed to basic and acidic residues. 5 C2H2-type zinc fingers span residues 1107–1129 (YECEDCGLGFVDLTDLTDHQKVH), 1163–1185 (YECPKCGESFIHSSFLFEHQRIH), 1225–1247 (IRCLLCGQGFIHSSALNEHMRLH), 1282–1304 (FECAVCGESFVNPAELADHVTVH), and 1332–1354 (YECKDCGKSFIHSTVLTKHKELH). The span at 1396 to 1415 (EPEVEAAEPEVEAAEPEVEA) shows a compositional bias: acidic residues. A disordered region spans residues 1396-1495 (EPEVEAAEPE…GIEDPEEGED (100 aa)). Repeat copies occupy residues 1397–1403 (PEVEAAE), 1404–1410 (PEVEAAE), 1411–1417 (PEVEAAE), 1418–1422 (PNGEA), 1425–1429 (PDGEA), 1432–1436 (PIGEA), and 1439–1443 (PNGEA). Residues 1397 to 1417 (PEVEAAEPEVEAAEPEVEAAE) form a 3 X 7 AA repeat of P-E-V-E-A-A-E region. The 4 X 5 AA repeat of P-X-G-E-A stretch occupies residues 1418-1443 (PNGEAEGPDGEAAEPIGEAGQPNGEA). 2 stretches are compositionally biased toward acidic residues: residues 1449–1466 (DADEPDGAGIEDPEERAE) and 1475–1495 (PEGDADEPDGVGIEDPEEGED). 2 consecutive C2H2-type zinc fingers follow at residues 1505 to 1527 (YDCHECTETFTSSTAFSEHLKTH) and 1564 to 1586 (FKCDVCGQLFNDRLSLARHQNTH).

It belongs to the krueppel C2H2-type zinc-finger protein family. As to quaternary structure, homodimer. Interacts with SIAH1A and SIAH2. Interacts with TRAF2. As to expression, brain, glial cells, astrocytes, embryo, placenta, testis, ovary and uterus. In the placenta it is found in the layer of villous cytotrophoblast cells while in the ovary it is found in the cells of the ovarian stroma including the thecal layers around the follicles. Expression is highly repressed in glioma cell lines.

The protein localises to the nucleus. The protein resides in the cytoplasm. Induces apoptosis in cooperation with SIAH1A. Acts as a mediator between p53/TP53 and BAX in a neuronal death pathway that is activated by DNA damage. Acts synergistically with TRAF2 and inhibits TNF induced apoptosis through activation of NF-kappa-B. Possesses a tumor suppressing activity in glioma cells. The polypeptide is Paternally-expressed gene 3 protein (PEG3) (Homo sapiens (Human)).